The following is a 278-amino-acid chain: S-formylglutathione hydrolase YeiG (278 aa).

Residues serine 145, aspartate 223, and histidine 256 each act as charge relay system in the active site.

The protein belongs to the esterase D family.

The catalysed reaction is S-formylglutathione + H2O = formate + glutathione + H(+). In terms of biological role, serine hydrolase involved in the detoxification of formaldehyde. Hydrolyzes S-formylglutathione to glutathione and formate. The chain is S-formylglutathione hydrolase YeiG (yeiG) from Escherichia coli O139:H28 (strain E24377A / ETEC).